We begin with the raw amino-acid sequence, 67 residues long: Large ribosomal subunit protein bL32c (67 aa).

It belongs to the bacterial ribosomal protein bL32 family.

The protein resides in the plastid. Its subcellular location is the chloroplast. The protein is Large ribosomal subunit protein bL32c of Chara vulgaris (Common stonewort).